Consider the following 231-residue polypeptide: PX domain-containing protein 1 (231 aa).

Residues 1-134 form the PX domain; it reads MASAVFEGTS…TFFERSPLDQ (134 aa).

In Bos taurus (Bovine), this protein is PX domain-containing protein 1 (PXDC1).